A 137-amino-acid polypeptide reads, in one-letter code: Small ribosomal subunit protein uS9 (137 aa).

It belongs to the universal ribosomal protein uS9 family.

In Picosynechococcus sp. (strain ATCC 27264 / PCC 7002 / PR-6) (Agmenellum quadruplicatum), this protein is Small ribosomal subunit protein uS9.